We begin with the raw amino-acid sequence, 253 residues long: Adenosylcobinamide-GDP ribazoletransferase (253 aa).

4 helical membrane passes run 33 to 53 (ISPIIVGISLGLIESVAYLIL), 106 to 126 (VGSGGIGLLLVYLSIQIVALL), 132 to 152 (LYTIFYLISSNVLSMSLSLYI), and 178 to 198 (ILLLELIPFISLYNVIVFIIF).

This sequence belongs to the CobS family. Mg(2+) serves as cofactor.

It is found in the cell membrane. The catalysed reaction is alpha-ribazole + adenosylcob(III)inamide-GDP = adenosylcob(III)alamin + GMP + H(+). It catalyses the reaction alpha-ribazole 5'-phosphate + adenosylcob(III)inamide-GDP = adenosylcob(III)alamin 5'-phosphate + GMP + H(+). It functions in the pathway cofactor biosynthesis; adenosylcobalamin biosynthesis; adenosylcobalamin from cob(II)yrinate a,c-diamide: step 7/7. In terms of biological role, joins adenosylcobinamide-GDP and alpha-ribazole to generate adenosylcobalamin (Ado-cobalamin). Also synthesizes adenosylcobalamin 5'-phosphate from adenosylcobinamide-GDP and alpha-ribazole 5'-phosphate. This is Adenosylcobinamide-GDP ribazoletransferase from Saccharolobus solfataricus (strain ATCC 35092 / DSM 1617 / JCM 11322 / P2) (Sulfolobus solfataricus).